The sequence spans 204 residues: Inner membrane-spanning protein YciB (204 aa).

The next 6 membrane-spanning stretches (helical) occupy residues 3 to 23 (AEIS…VFFF), 45 to 65 (IFIA…VSWI), 70 to 90 (LPIM…LTLW), 107 to 127 (LFGV…GYVF), 145 to 165 (WGVF…MFTT), and 168 to 188 (WVAF…MAQM).

This sequence belongs to the YciB family.

Its subcellular location is the cell inner membrane. Functionally, plays a role in cell envelope biogenesis, maintenance of cell envelope integrity and membrane homeostasis. This Agrobacterium fabrum (strain C58 / ATCC 33970) (Agrobacterium tumefaciens (strain C58)) protein is Inner membrane-spanning protein YciB.